The chain runs to 143 residues: Flagellar assembly factor FliW (143 aa).

It belongs to the FliW family. As to quaternary structure, interacts with translational regulator CsrA and flagellin(s).

It localises to the cytoplasm. Functionally, acts as an anti-CsrA protein, binds CsrA and prevents it from repressing translation of its target genes, one of which is flagellin. Binds to flagellin and participates in the assembly of the flagellum. The chain is Flagellar assembly factor FliW from Bacillus licheniformis (strain ATCC 14580 / DSM 13 / JCM 2505 / CCUG 7422 / NBRC 12200 / NCIMB 9375 / NCTC 10341 / NRRL NRS-1264 / Gibson 46).